Reading from the N-terminus, the 598-residue chain is Thiamine transporter (598 aa).

At 1–41 (MSFGSKVSRALRFLEIPVKDRASVSFLKNPDLQPIKSANQT) the chain is on the cytoplasmic side. Residues 42–62 (WGFWSNFAYWGVMSFSVGTWM) form a helical membrane-spanning segment. The Extracellular segment spans residues 63–73 (SASSALGVGLS). A helical transmembrane segment spans residues 74 to 94 (YPETIGTFIVGDVLTIIFTLA). Residues 95–111 (NSCPGYDWKVGFTLAQR) lie on the Cytoplasmic side of the membrane. Residues 112–132 (FVFGIYGSAFGIIIRILMSIV) traverse the membrane as a helical segment. Residues 133 to 173 (NYGSNAWVGGLCINMILDSWSHHYLHLPNTLSSKVAMTTKE) are Extracellular-facing. The chain crosses the membrane as a helical span at residues 174–194 (LIGFIIFHVLTAFCYLMKPYH). The Cytoplasmic segment spans residues 195–197 (MNY). The chain crosses the membrane as a helical span at residues 198–218 (ILIWSCVATFFSMLGMVIYLA). Residues 219 to 240 (KQAHGVGELFTSTKSTATGSTK) lie on the Extracellular side of the membrane. Residues 241–261 (AWAWVYMISYWFGSVSPGSTN) form a helical membrane-spanning segment. The Cytoplasmic segment spans residues 262–274 (QSDYSRFGSSNWA). Residues 275–295 (IWAGTICALLIPTTLIPVFGV) traverse the membrane as a helical segment. Over 296 to 332 (IGASTCDKLYGEQYWMPMDIFNHWLTTNYSAGARAGA) the chain is Extracellular. The helical transmembrane segment at 333-353 (FFCGLSFVLSQMSYTISNCGF) threads the bilayer. The Cytoplasmic segment spans residues 354–371 (ASGMDLAGLLPKYVDIKR). Residues 372–392 (GALFAACVSWACLPWNFYNSS) form a helical membrane-spanning segment. The Extracellular portion of the chain corresponds to 393–394 (ST). A helical transmembrane segment spans residues 395–415 (FLTVMSSFGVVMTPIISVMIC). Residues 416 to 446 (DNFLIRKRQYSITNAFILKGEYYFTKGVNWR) lie on the Cytoplasmic side of the membrane. A helical transmembrane segment spans residues 447–467 (AIVAWVCGMTPGLPGIAWEVN). The Extracellular portion of the chain corresponds to 468–483 (NDYFHNTGIVNFFYGD). Residues 484–504 (SFFSFLISFFVYWGLCLLFPF) traverse the membrane as a helical segment. Residues 505 to 598 (KITVKHDDKD…QSSTASEKAA (94 aa)) are Cytoplasmic-facing. The residue at position 560 (Ser-560) is a Phosphoserine. A disordered region spans residues 574–598 (NTNEFEIVHHKNNEKQSSTASEKAA). Over residues 588-598 (KQSSTASEKAA) the composition is skewed to polar residues.

Belongs to the purine-cytosine permease (2.A.39) family.

Its subcellular location is the membrane. Functionally, responsible for intake of thiamine. The protein is Thiamine transporter (THI7) of Saccharomyces cerevisiae (strain ATCC 204508 / S288c) (Baker's yeast).